Reading from the N-terminus, the 1358-residue chain is Indole-3-acetaldehyde oxidase (1358 aa).

The 88-residue stretch at serine 11–isoleucine 98 folds into the 2Fe-2S ferredoxin-type domain. 3 residues coordinate [2Fe-2S] cluster: cysteine 50, cysteine 55, and cysteine 58. One can recognise an FAD-binding PCMH-type domain in the interval isoleucine 241–serine 419. Residues serine 532–histidine 559 form a disordered region. Over residues asparagine 537–aspartate 554 the composition is skewed to polar residues.

This sequence belongs to the xanthine dehydrogenase family. As to quaternary structure, aldehyde oxidases (AO) are homodimers and heterodimers of AO subunits. [2Fe-2S] cluster serves as cofactor. FAD is required as a cofactor. Requires Mo-molybdopterin as cofactor. In terms of tissue distribution, mostly expressed in roots, and, to a lower extent, in mesocotyl, leaves and coleoptile. Accumulates in apical region of maize coleoptiles (at protein level).

The protein resides in the cytoplasm. It catalyses the reaction indole-3-acetaldehyde + O2 + H2O = (indol-3-yl)acetate + H2O2 + H(+). Inhibited by 2-mercaptoethanol, p-chloromercuribenzoate, and iodoacetate. Its function is as follows. In higher plants aldehyde oxidases (AO) appear to be homo- and heterodimeric assemblies of AO subunits with probably different physiological functions. Involved in the biosynthesis of auxin from (indol-3-yl)acetaldehyde. Can also use indole-3-aldehyde and benzaldehyde as substrate. This is Indole-3-acetaldehyde oxidase (AO1) from Zea mays (Maize).